The following is a 228-amino-acid chain: LexA repressor (228 aa).

The H-T-H motif DNA-binding region spans 26–46 (FDEMKEALDLRSKSGIHRLIT). Residues Ser149 and Lys187 each act as for autocatalytic cleavage activity in the active site.

The protein belongs to the peptidase S24 family. As to quaternary structure, homodimer.

The catalysed reaction is Hydrolysis of Ala-|-Gly bond in repressor LexA.. In terms of biological role, represses a number of genes involved in the response to DNA damage (SOS response), including recA and lexA. In the presence of single-stranded DNA, RecA interacts with LexA causing an autocatalytic cleavage which disrupts the DNA-binding part of LexA, leading to derepression of the SOS regulon and eventually DNA repair. The sequence is that of LexA repressor from Jannaschia sp. (strain CCS1).